The primary structure comprises 151 residues: MKVILRKDVAALGDAGEVVAVKNGYANNYLIPQGMAIRATEGTLKALETERKQQVKKVEMLRKTARELAAKIEQMTLKVFAKAGESGKLFGTVTSGDIADALKAQGIEIDRRKITLEAPVKTLGKYEADAKVFSDVAVKISFEVEAEGSEA.

Belongs to the bacterial ribosomal protein bL9 family.

Binds to the 23S rRNA. The chain is Large ribosomal subunit protein bL9 from Chlorobium phaeobacteroides (strain DSM 266 / SMG 266 / 2430).